Here is a 41-residue protein sequence, read N- to C-terminus: Pathogenesis-related protein (41 aa).

The protein belongs to the CRISP family.

Its function is as follows. Probably involved in the defense reaction of plants against pathogens. The chain is Pathogenesis-related protein from Cucumis melo (Muskmelon).